A 214-amino-acid chain; its full sequence is Imidazole glycerol phosphate synthase subunit HisH (214 aa).

One can recognise a Glutamine amidotransferase type-1 domain in the interval 3-211 (IIAVIDYDMG…VEQVQATLAT (209 aa)). Catalysis depends on Cys-81, which acts as the Nucleophile. Catalysis depends on residues His-186 and Glu-188.

As to quaternary structure, heterodimer of HisH and HisF.

The protein resides in the cytoplasm. It catalyses the reaction 5-[(5-phospho-1-deoxy-D-ribulos-1-ylimino)methylamino]-1-(5-phospho-beta-D-ribosyl)imidazole-4-carboxamide + L-glutamine = D-erythro-1-(imidazol-4-yl)glycerol 3-phosphate + 5-amino-1-(5-phospho-beta-D-ribosyl)imidazole-4-carboxamide + L-glutamate + H(+). It carries out the reaction L-glutamine + H2O = L-glutamate + NH4(+). It functions in the pathway amino-acid biosynthesis; L-histidine biosynthesis; L-histidine from 5-phospho-alpha-D-ribose 1-diphosphate: step 5/9. Its function is as follows. IGPS catalyzes the conversion of PRFAR and glutamine to IGP, AICAR and glutamate. The HisH subunit catalyzes the hydrolysis of glutamine to glutamate and ammonia as part of the synthesis of IGP and AICAR. The resulting ammonia molecule is channeled to the active site of HisF. In Acaryochloris marina (strain MBIC 11017), this protein is Imidazole glycerol phosphate synthase subunit HisH.